Here is a 79-residue protein sequence, read N- to C-terminus: Small ribosomal subunit protein eS17 (79 aa).

Belongs to the eukaryotic ribosomal protein eS17 family.

The polypeptide is Small ribosomal subunit protein eS17 (Saccharolobus islandicus (strain Y.N.15.51 / Yellowstone #2) (Sulfolobus islandicus)).